We begin with the raw amino-acid sequence, 314 residues long: Mitochondrial 2-oxoglutarate/malate carrier protein (314 aa).

N-acetylalanine is present on A2. At S6 the chain carries Phosphoserine. Solcar repeat units lie at residues 23 to 108, 117 to 208, and 217 to 306; these read VKFL…LFER, PGFL…SKQF, and DNIL…MNKA. A helical membrane pass occupies residues 24–42; it reads KFLFGGLAGMGATVFVQPL. The residue at position 57 (K57) is an N6-succinyllysine. K73 bears the N6-acetyllysine mark. A helical transmembrane segment spans residues 83-101; that stretch reads GLSAGLLRQATYTTTRLGI. Y102 is modified (phosphotyrosine). Transmembrane regions (helical) follow at residues 119 to 140, 183 to 202, and 222 to 240; these read FLLK…GTPA, GCIP…LASY, and HFCA…SMPV. K256 is modified (N6-acetyllysine). The helical transmembrane segment at 281-300 threads the bilayer; that stretch reads GFTPYYARLGPHTVLTFIFL.

This sequence belongs to the mitochondrial carrier (TC 2.A.29) family. In terms of assembly, interacts with SMIM26. As to expression, most highly expressed in the heart.

It localises to the mitochondrion inner membrane. It catalyses the reaction (S)-malate(in) + 2-oxoglutarate(out) = (S)-malate(out) + 2-oxoglutarate(in). The enzyme catalyses malonate(in) + 2-oxoglutarate(out) = malonate(out) + 2-oxoglutarate(in). The catalysed reaction is succinate(in) + 2-oxoglutarate(out) = succinate(out) + 2-oxoglutarate(in). It carries out the reaction maleate(in) + 2-oxoglutarate(out) = maleate(out) + 2-oxoglutarate(in). It catalyses the reaction oxaloacetate(in) + 2-oxoglutarate(out) = oxaloacetate(out) + 2-oxoglutarate(in). Catalyzes the transport of 2-oxoglutarate (alpha-oxoglutarate) across the inner mitochondrial membrane in an electroneutral exchange for malate. Can also exchange 2-oxoglutarate for other dicarboxylic acids such as malonate, succinate, maleate and oxaloacetate, although with lower affinity. Contributes to several metabolic processes, including the malate-aspartate shuttle, the oxoglutarate/isocitrate shuttle, in gluconeogenesis from lactate, and in nitrogen metabolism. Maintains mitochondrial fusion and fission events, and the organization and morphology of cristae. Involved in the regulation of apoptosis. Helps protect from cytotoxic-induced apoptosis by modulating glutathione levels in mitochondria. The sequence is that of Mitochondrial 2-oxoglutarate/malate carrier protein (SLC25A11) from Homo sapiens (Human).